The following is a 243-amino-acid chain: 2-C-methyl-D-erythritol 4-phosphate cytidylyltransferase (243 aa).

This sequence belongs to the IspD/TarI cytidylyltransferase family. IspD subfamily.

The catalysed reaction is 2-C-methyl-D-erythritol 4-phosphate + CTP + H(+) = 4-CDP-2-C-methyl-D-erythritol + diphosphate. Its pathway is isoprenoid biosynthesis; isopentenyl diphosphate biosynthesis via DXP pathway; isopentenyl diphosphate from 1-deoxy-D-xylulose 5-phosphate: step 2/6. Functionally, catalyzes the formation of 4-diphosphocytidyl-2-C-methyl-D-erythritol from CTP and 2-C-methyl-D-erythritol 4-phosphate (MEP). The sequence is that of 2-C-methyl-D-erythritol 4-phosphate cytidylyltransferase from Chlorobium phaeovibrioides (strain DSM 265 / 1930) (Prosthecochloris vibrioformis (strain DSM 265)).